Reading from the N-terminus, the 433-residue chain is Agnestins efflux protein AgnL12 (433 aa).

Polar residues-rich tracts occupy residues 1-10 (MSRSTSTELQ) and 25-40 (SIASSETASGSKPPST). Residues 1-40 (MSRSTSTELQQELPASKEVPPDPTSIASSETASGSKPPST) form a disordered region. The next 12 helical transmembrane spans lie at 47–67 (ILVLVGSFLVTFCSVGFTNAF), 87–107 (ISWIGSFNIFCMFGCTFISGY), 116–136 (LLICFGSLVMVFALFMLSLST), 141–161 (IFLTQAFLFGVGISFVLLPAM), 174–194 (LAMGIIVSGSSLGGVIWPIAL), 205–225 (WTVRIAAFIMLPLLGLACLAI), 248–268 (VMIFLAIGLFLIFLGLFSPFF), 285–305 (FYMVSVVNASSLFGRILPGLI), 309–329 (VGNYNVLFMVAVFSGLVACCW), 335–355 (VGGIVVFSLAYGLASGAVISL), 370–390 (GVAMGVVMTFLSIAGLVGTPI), and 401–421 (LGLSLFSGLVMLLGSVFILLA).

This sequence belongs to the major facilitator superfamily. Monocarboxylate porter (TC 2.A.1.13) family.

Its subcellular location is the cell membrane. In terms of biological role, efflux pump that may be involved in the secretion of agnestins, dihydroxy-xanthone metabolites. The sequence is that of Agnestins efflux protein AgnL12 from Paecilomyces divaricatus (Penicillium divaricatum).